Reading from the N-terminus, the 438-residue chain is MYLIADWRRTHYSEEVIPEMDGQEVILMGWVHSIRALGKLAFVILRDREGTIQAVVPKQKVDEETFEIAKKLGKEDIIAIRGKVVANEKAPKGFEVIPIEIRVLNKADAPLPLDPSEKVPAEIDTRLDKRFLDIRRPKIQAIFKIRSEMLRSIRKTFADEGFIEVNTPKLVASATEGGTELFPISYFEKEAFLGQSPQLYKQMMMAGGFDKVFEIAQIFRAEEHNTRRHLNEAVSIDTEMSFVNEKDAMAMLEKVVYNCYADIEYNRPQEIELLELNWEVPEKTFDKVTYTEAIDIAISKGVEIEWGEDLSRAAERAVGDEMGGLYFITEWPTQTRPFYTLPHEKDAKVCKAFDLMYKELEISSGAQRVHKYDLLVENISNMGMNPDSFETYLEAFKFGMPPHAGWGLGADRFAMVLTAQDNIRECVLFPRDRQRLTP.

E176 contacts L-aspartate. Residues Q198–K201 are aspartate. R220 provides a ligand contact to L-aspartate. ATP is bound by residues R220–E222, R228–L230, and E361. Mg(2+) contacts are provided by E361 and S364. S364 and R368 together coordinate L-aspartate. G409 to R412 serves as a coordination point for ATP.

The protein belongs to the class-II aminoacyl-tRNA synthetase family. Type 2 subfamily. In terms of assembly, homodimer. Mg(2+) is required as a cofactor.

It localises to the cytoplasm. It catalyses the reaction tRNA(Asx) + L-aspartate + ATP = L-aspartyl-tRNA(Asx) + AMP + diphosphate. Its function is as follows. Aspartyl-tRNA synthetase with relaxed tRNA specificity since it is able to aspartylate not only its cognate tRNA(Asp) but also tRNA(Asn). Reaction proceeds in two steps: L-aspartate is first activated by ATP to form Asp-AMP and then transferred to the acceptor end of tRNA(Asp/Asn). The sequence is that of Aspartate--tRNA(Asp/Asn) ligase from Methanococcus maripaludis (strain C6 / ATCC BAA-1332).